Here is a 131-residue protein sequence, read N- to C-terminus: NADPH-dependent 7-cyano-7-deazaguanine reductase (131 aa).

C48 acts as the Thioimide intermediate in catalysis. Catalysis depends on D55, which acts as the Proton donor. Substrate-binding positions include 70–72 and 89–90; these read VEL and QE.

The protein belongs to the GTP cyclohydrolase I family. QueF type 1 subfamily.

The protein localises to the cytoplasm. It catalyses the reaction 7-aminomethyl-7-carbaguanine + 2 NADP(+) = 7-cyano-7-deazaguanine + 2 NADPH + 3 H(+). Its pathway is tRNA modification; tRNA-queuosine biosynthesis. Functionally, catalyzes the NADPH-dependent reduction of 7-cyano-7-deazaguanine (preQ0) to 7-aminomethyl-7-deazaguanine (preQ1). This chain is NADPH-dependent 7-cyano-7-deazaguanine reductase, found in Caldicellulosiruptor bescii (strain ATCC BAA-1888 / DSM 6725 / KCTC 15123 / Z-1320) (Anaerocellum thermophilum).